The following is a 173-amino-acid chain: Inorganic pyrophosphatase (173 aa).

Substrate is bound by residues Lys-29, Arg-43, and Tyr-55. Mg(2+)-binding residues include Asp-65, Asp-70, and Asp-102. Tyr-141 lines the substrate pocket.

The protein belongs to the PPase family. In terms of assembly, homohexamer. The cofactor is Mg(2+).

It localises to the cytoplasm. The catalysed reaction is diphosphate + H2O = 2 phosphate + H(+). Its function is as follows. Catalyzes the hydrolysis of inorganic pyrophosphate (PPi) forming two phosphate ions. The chain is Inorganic pyrophosphatase from Rickettsia conorii (strain ATCC VR-613 / Malish 7).